A 202-amino-acid polypeptide reads, in one-letter code: Na(+)-translocating NADH-quinone reductase subunit E (202 aa).

Transmembrane regions (helical) follow at residues 5 to 25 (VSLF…FLGM), 35 to 55 (VSTA…TVPL), 81 to 101 (FLGL…LEMF), 114 to 134 (GVFL…LFMV), 144 to 164 (LTYG…LAGI), and 180 to 200 (LGIT…FGGM).

This sequence belongs to the NqrDE/RnfAE family. As to quaternary structure, composed of six subunits; NqrA, NqrB, NqrC, NqrD, NqrE and NqrF.

It is found in the cell inner membrane. The catalysed reaction is a ubiquinone + n Na(+)(in) + NADH + H(+) = a ubiquinol + n Na(+)(out) + NAD(+). In terms of biological role, NQR complex catalyzes the reduction of ubiquinone-1 to ubiquinol by two successive reactions, coupled with the transport of Na(+) ions from the cytoplasm to the periplasm. NqrA to NqrE are probably involved in the second step, the conversion of ubisemiquinone to ubiquinol. The chain is Na(+)-translocating NADH-quinone reductase subunit E from Psychrobacter sp. (strain PRwf-1).